The chain runs to 449 residues: Hyaluronidase-3 (449 aa).

A signal peptide spans 1–23 (MYHIWIKFLAAWIFLKKFNGVHV). Disulfide bonds link C47-C340 and C211-C227. N67, N103, and N111 each carry an N-linked (GlcNAc...) asparagine glycan. Residue E135 is the Proton donor of the active site. N153 is a glycosylation site (N-linked (GlcNAc...) asparagine). The N-linked (GlcNAc...) asparagine glycan is linked to N357. 3 cysteine pairs are disulfide-bonded: C365–C376, C370–C427, and C429–C438. The N-linked (GlcNAc...) asparagine glycan is linked to N401. The EGF-like domain maps to 427-438 (CQCYQGWKGLYC).

The protein belongs to the glycosyl hydrolase 56 family. Monomer. In terms of tissue distribution, expressed by the venom gland.

Its subcellular location is the secreted. It carries out the reaction Random hydrolysis of (1-&gt;4)-linkages between N-acetyl-beta-D-glucosamine and D-glucuronate residues in hyaluronate.. Snake venom endo-hyaluronidase that degrades hyaluronan to smaller oligosaccharide fragments. In venom, it is not toxic by itself, but increases the diffusion of other venom proteins by degrading the extracellular matrix. In addition, it displays antiedematogenic activity. This is Hyaluronidase-3 from Cerastes cerastes (Horned desert viper).